The sequence spans 378 residues: Anhydro-N-acetylmuramic acid kinase (378 aa).

An ATP-binding site is contributed by 9–16; that stretch reads GTSADGID.

Belongs to the anhydro-N-acetylmuramic acid kinase family.

The catalysed reaction is 1,6-anhydro-N-acetyl-beta-muramate + ATP + H2O = N-acetyl-D-muramate 6-phosphate + ADP + H(+). The protein operates within amino-sugar metabolism; 1,6-anhydro-N-acetylmuramate degradation. It participates in cell wall biogenesis; peptidoglycan recycling. In terms of biological role, catalyzes the specific phosphorylation of 1,6-anhydro-N-acetylmuramic acid (anhMurNAc) with the simultaneous cleavage of the 1,6-anhydro ring, generating MurNAc-6-P. Is required for the utilization of anhMurNAc either imported from the medium or derived from its own cell wall murein, and thus plays a role in cell wall recycling. The chain is Anhydro-N-acetylmuramic acid kinase from Synechococcus sp. (strain ATCC 27144 / PCC 6301 / SAUG 1402/1) (Anacystis nidulans).